A 377-amino-acid chain; its full sequence is tRNA-splicing endonuclease subunit SEN2 (377 aa).

A coiled-coil region spans residues 119–174 (ETEMTLEKVTQQRRLQRLEFKKERAKLERELLELRKKGGHIDEENILLEKQRESLR). Residues Y289, H297, and K328 contribute to the active site.

This sequence belongs to the tRNA-intron endonuclease family. In terms of assembly, heterotetramer composed of SEN2, SEN15, SEN34 and SEN54. Interacts directly with SEN54.

The protein localises to the nucleus. It localises to the endomembrane system. Its subcellular location is the mitochondrion outer membrane. It catalyses the reaction pretRNA = a 3'-half-tRNA molecule with a 5'-OH end + a 5'-half-tRNA molecule with a 2',3'-cyclic phosphate end + an intron with a 2',3'-cyclic phosphate and a 5'-hydroxyl terminus.. Functionally, constitutes one of the two catalytic subunit of the tRNA-splicing endonuclease complex, a complex responsible for identification and cleavage of the splice sites in pre-tRNA. It cleaves pre-tRNA at the 5'- and 3'-splice sites to release the intron. The products are an intron and two tRNA half-molecules bearing 2',3'-cyclic phosphate and 5'-OH termini. There are no conserved sequences at the splice sites, but the intron is invariably located at the same site in the gene, placing the splice sites an invariant distance from the constant structural features of the tRNA body. This subunit may anchor the endonuclease complex to the nuclear membrane. Probably carries the active site for 5'-splice site cleavage. The protein is tRNA-splicing endonuclease subunit SEN2 (SEN2) of Saccharomyces cerevisiae (strain ATCC 204508 / S288c) (Baker's yeast).